Consider the following 1199-residue polypeptide: MPLTGVEPARMNRKKGDKGFESPRPYKLTHQVVCINNINFQRKSVVGFVELTIFPTVANLNRIKLNSKQCRIYRVRINDLEAAFIYNDPTLEVCHSESKQRNLNYFSNAYAAAVSAVDPDAGNGELCIKVPSELWKHVDELKVLKIHINFSLDQPKGGLHFVVPSVEGSMAERGAHVFSCGYQNSTRFWFPCVDSYSELCTWKLEFTVDAAMVAVSNGDLVETVYTHDMRKKTFHYMLTIPTAASNISLAIGPFEILVDPYMHEVTHFCLPQLLPLLKHTTSYLHEVFEFYEEILTCRYPYSCFKTVFIDEAYVEVAAYASMSIFSTNLLHSAMIIDETPLTRRCLAQSLAQQFFGCFISRMSWSDEWVLKGISGYIYGLWMKKTFGVNEYRHWIKEELDKIVAYELKTGGVLLHPIFGGGKEKDNPASHLHFSIKHPHTLSWEYYSMFQCKAHLVMRLIENRISMEFMLQVFNKLLSLASTASSQKFQSHMWSQMLVSTSGFLKSISNVSGKDIQPLIKQWVDQSGVVKFYGSFAFNRKRNVLELEIKQDYTSPGTQKYVGPLKVTVQELDGSFNHTLQIEENSLKHDIPCHSKSRRNKKKKIPLMNGEEVDMDLSAMDADSPLLWIRIDPDMSVLRKVEFEQADFMWQYQLRYERDVVAQQESILALEKFPTPASRLALTDILEQEQCFYRVRMSACFCLAKIANSMVSTWTGPPAMKSLFTRMFCCKSCPNIVKTNNFMSFQSYFLQKTMPVAMALLRDVHNLCPKEVLTFILDLIKYNDNRKNKFSDNYYRAEMIDALANSVTPAVSVNNEVRTLDNLNPDVRLILEEITRFLNMEKLLPSYRHTITVSCLRAIRVLQKNGHVPSDPALFKSYAEYGHFVDIRIAALEAVVDYTKVDRSYEELQWLLNMIQNDPVPYVRHKILNMLTKNPPFTKNMESPLCNEALVDQLWKLMNSGTSHDWRLRCGAVDLYFTLFGLSRPSCLPLPELGLVLNLKEKKAVLNPTIIPESVAGNQEAANNPSSHPQLVGFQNPFSSSQDEEEIDMDTVHDSQAFISHHLNMLERPSTPGLSKYRPASSRSALIPQHSAGCDSTPTTKPQWSLELARKGTGKEQAPLEMSMHPAASAPLSVFTKESTASKHSDHHHHHHHEHKKKKKKHKHKHKHKHKHDSKEKDKEPFTFSSPASGRSIRSPSLSD.

Disordered regions lie at residues M1–P23, R1067–Q1102, and K1136–D1199. A compositionally biased stretch (polar residues) spans C1093–Q1102. Residues S1144 to H1171 show a composition bias toward basic residues. Positions T1182 to D1199 are enriched in polar residues. Phosphoserine occurs at positions 1185, 1188, 1194, 1196, and 1198.

This sequence belongs to the TAF2 family. Component of the TFIID basal transcription factor complex, composed of TATA-box-binding protein TBP, and a number of TBP-associated factors (TAFs), including TAF1, TAF2, TAF3, TAF4, TAF5, TAF6, TAF7, TAF8, TAF9, TAF10, TAF11, TAF12 and TAF13. Interacts with TAF2C1. Component of the TFTC-HAT complex. Expressed in all tissues tested.

It localises to the nucleus. In terms of biological role, the TFIID basal transcription factor complex plays a major role in the initiation of RNA polymerase II (Pol II)-dependent transcription. TFIID recognizes and binds promoters with or without a TATA box via its subunit TBP, a TATA-box-binding protein, and promotes assembly of the pre-initiation complex (PIC). The TFIID complex consists of TBP and TBP-associated factors (TAFs), including TAF1, TAF2, TAF3, TAF4, TAF5, TAF6, TAF7, TAF8, TAF9, TAF10, TAF11, TAF12 and TAF13. TAF2 forms a promoter DNA binding subcomplex of TFIID, together with TAF7 and TAF1. The protein is Transcription initiation factor TFIID subunit 2 (TAF2) of Homo sapiens (Human).